Reading from the N-terminus, the 717-residue chain is Mitotic spindle assembly checkpoint protein MAD1 (717 aa).

At Met1 the chain carries N-acetylmethionine. Ser16 carries the post-translational modification Phosphoserine. Residues 46 to 631 (EQSMQLEERA…QTKIQEFRKV (586 aa)) are a coiled coil. N6-acetyllysine; alternate is present on Lys61. Lys61 participates in a covalent cross-link: Glycyl lysine isopeptide (Lys-Gly) (interchain with G-Cter in SUMO2); alternate. The Nuclear localization signal signature appears at 79 to 82 (KRAR). Phosphoserine is present on residues Ser214 and Ser428. The segment at 380 to 532 (LLEERKKREI…EMQMERLTLQ (153 aa)) is necessary for interaction with NEK2. Residues 540 to 551 (TKVLHMSLNPAS) are necessary for interaction with MAD2L1.

It belongs to the MAD1 family. In terms of assembly, homodimer. Dimerizes via its N- and C- terminal regions. Heterodimerizes with MAD2L1 in order to form a tetrameric MAD1L1-MAD2L1 core complex. Interacts with the closed conformation form of MAD2L1 (C-MAD2) and open conformation form of MAD2L1 (O-MAD2). It is unclear whether MAD1L1 dimerization promotes the conversion of closed to open conformation of MAD2L1. Formation of a heterotetrameric core complex containing two molecules each of MAD1L1 and of MAD2L1 promotes binding of another molecule of MAD2L1 to each MAD2L1, resulting in a heterohexamer. Perturbation of the original MAD1L1-MAD2L1 structure by the spindle checkpoint may decrease MAD2L1 affinity for MAD1L1. CDC20 can compete with MAD1L1 for MAD2L1 binding, until the attachment and/or tension dampen the checkpoint signal, preventing further release of MAD2L1 on to CDC20. Also able to interact with the BUB1/BUB3 complex. Interacts with NEK2. Interacts with TTK. Interacts with TPR; the interactions occurs in a microtubule-independent manner. Interacts with IK. Interacts with the viral Tax protein. Interacts with PRAP1. Phosphorylated; by BUB1. Become hyperphosphorylated in late S through M phases or after mitotic spindle damage.

The protein localises to the nucleus. Its subcellular location is the chromosome. The protein resides in the centromere. It is found in the kinetochore. It localises to the nucleus envelope. The protein localises to the cytoplasm. Its subcellular location is the cytoskeleton. The protein resides in the microtubule organizing center. It is found in the centrosome. It localises to the spindle. The protein localises to the spindle pole. Its function is as follows. Component of the spindle-assembly checkpoint that prevents the onset of anaphase until all chromosomes are properly aligned at the metaphase plate. Forms a heterotetrameric complex with the closed conformation form of MAD2L1 (C-MAD2) at unattached kinetochores during prometaphase, recruits an open conformation of MAD2L1 (O-MAD2) and promotes the conversion of O-MAD2 to C-MAD2, which ensures mitotic checkpoint signaling. This is Mitotic spindle assembly checkpoint protein MAD1 (MAD1L1) from Cricetulus griseus (Chinese hamster).